The primary structure comprises 185 residues: Elongation factor P (185 aa).

This sequence belongs to the elongation factor P family.

It is found in the cytoplasm. The protein operates within protein biosynthesis; polypeptide chain elongation. In terms of biological role, involved in peptide bond synthesis. Stimulates efficient translation and peptide-bond synthesis on native or reconstituted 70S ribosomes in vitro. Probably functions indirectly by altering the affinity of the ribosome for aminoacyl-tRNA, thus increasing their reactivity as acceptors for peptidyl transferase. This chain is Elongation factor P, found in Nitratidesulfovibrio vulgaris (strain DP4) (Desulfovibrio vulgaris).